The following is a 313-amino-acid chain: Ribosomal RNA small subunit methyltransferase H (313 aa).

Residues 37 to 39 (GGH), Asp-57, Phe-82, Asp-104, and Gln-111 each bind S-adenosyl-L-methionine.

Belongs to the methyltransferase superfamily. RsmH family.

Its subcellular location is the cytoplasm. The catalysed reaction is cytidine(1402) in 16S rRNA + S-adenosyl-L-methionine = N(4)-methylcytidine(1402) in 16S rRNA + S-adenosyl-L-homocysteine + H(+). Specifically methylates the N4 position of cytidine in position 1402 (C1402) of 16S rRNA. This chain is Ribosomal RNA small subunit methyltransferase H, found in Alteromonas mediterranea (strain DSM 17117 / CIP 110805 / LMG 28347 / Deep ecotype).